Consider the following 209-residue polypeptide: Uracil phosphoribosyltransferase (209 aa).

Residues Arg79, Arg104, and 131–139 contribute to the 5-phospho-alpha-D-ribose 1-diphosphate site; that span reads DPMLATGGS. Uracil-binding positions include Ile194 and 199 to 201; that span reads GDA. Asp200 contacts 5-phospho-alpha-D-ribose 1-diphosphate.

It belongs to the UPRTase family. It depends on Mg(2+) as a cofactor.

It carries out the reaction UMP + diphosphate = 5-phospho-alpha-D-ribose 1-diphosphate + uracil. Its pathway is pyrimidine metabolism; UMP biosynthesis via salvage pathway; UMP from uracil: step 1/1. With respect to regulation, allosterically activated by GTP. Catalyzes the conversion of uracil and 5-phospho-alpha-D-ribose 1-diphosphate (PRPP) to UMP and diphosphate. In Streptococcus pyogenes serotype M1, this protein is Uracil phosphoribosyltransferase.